The following is a 554-amino-acid chain: RecBCD enzyme subunit RecD (554 aa).

155-162 is a binding site for ATP; that stretch reads GGPGTGKT.

The protein belongs to the RecD family. Heterotrimer of RecB, RecC and RecD. All subunits contribute to DNA-binding.

It carries out the reaction Couples ATP hydrolysis with the unwinding of duplex DNA at the replication fork by translocating in the 5'-3' direction. This creates two antiparallel DNA single strands (ssDNA). The leading ssDNA polymer is the template for DNA polymerase III holoenzyme which synthesizes a continuous strand.. The catalysed reaction is ATP + H2O = ADP + phosphate + H(+). Its function is as follows. A helicase/nuclease that prepares dsDNA breaks (DSB) for recombinational DNA repair. Binds to DSBs and unwinds DNA via a highly rapid and processive ATP-dependent bidirectional helicase activity. Holoenzyme degrades any linearized DNA that is unable to undergo homologous recombination. In the holoenzyme this subunit has ssDNA-dependent ATPase and 5'-3' helicase activity. When added to pre-assembled RecBC greatly stimulates nuclease activity and augments holoenzyme processivity. Unlike the case in E.coli, suppresses RecA-dependent homologous recombination, is instead required for single-strand annealing pathway repair of DSB. The sequence is that of RecBCD enzyme subunit RecD from Mycolicibacterium smegmatis (strain ATCC 700084 / mc(2)155) (Mycobacterium smegmatis).